We begin with the raw amino-acid sequence, 242 residues long: Ribosomal RNA small subunit methyltransferase G (242 aa).

Residues G78, F83, 129–130 (AE), and R148 each bind S-adenosyl-L-methionine. The segment at 221–242 (TKKRYPRKAGVPEKSPIGGKHD) is disordered.

This sequence belongs to the methyltransferase superfamily. RNA methyltransferase RsmG family.

The protein localises to the cytoplasm. Its function is as follows. Specifically methylates the N7 position of a guanine in 16S rRNA. In Oenococcus oeni (strain ATCC BAA-331 / PSU-1), this protein is Ribosomal RNA small subunit methyltransferase G.